We begin with the raw amino-acid sequence, 465 residues long: MLPLVALVGRPNVGKSTIFNALTRTRDALVHDQPGVTRDRNYGVCRLDEQQPFIVVDTGGIAGDEEGLAGATARQARAAAGEADLVLFVVDGREGASSLDDEILAWLRKLARPTVLVINKIDGTDEETVRSEFARYGFSDVVALSAAHRQGIDELLDEVGARLPEEGAGELLDNDPARVRIAFVGRPNVGKSTLVNRLLGEERMIASEVPGTTRDSIAVDLERDGRQYRLIDTAGLRRRGKVEEAVEKFSAFKTLQAIEQCQVAVLMLDATEGVTDQDATILGAILDAGRALVVAINKWDGQSDYQRAQAEDLLSRKLGFVNWAEAVRISALHGSGMRELFQAIHRAHASATHEFSTSEVNQALEIAYETNPPPSIRGHVSKLRYVHPGGANPPTFIVHGTRLKVLPESYKRYLENFFRKRFKLVGTPVRFIFREGANPYEGKKNPLSDRQVARKRRLMRHVKGK.

2 consecutive EngA-type G domains span residues 3–167 (PLVA…PEEG) and 179–352 (VRIA…ASAT). GTP-binding positions include 9–16 (GRPNVGKS), 57–61 (DTGGI), 119–122 (NKID), 185–192 (GRPNVGKS), 232–236 (DTAGL), and 297–300 (NKWD). The KH-like domain occupies 353 to 437 (HEFSTSEVNQ…PVRFIFREGA (85 aa)).

Belongs to the TRAFAC class TrmE-Era-EngA-EngB-Septin-like GTPase superfamily. EngA (Der) GTPase family. In terms of assembly, associates with the 50S ribosomal subunit.

Its function is as follows. GTPase that plays an essential role in the late steps of ribosome biogenesis. The chain is GTPase Der from Xanthomonas axonopodis pv. citri (strain 306).